A 335-amino-acid chain; its full sequence is Mesoderm-specific transcript homolog protein (335 aa).

2 helical membrane passes run 13–33 (WWVQVGLLAVPLLAAYLHIPP) and 63–83 (VGVVGSPEIVVLLHGFPTSSY). In terms of domain architecture, AB hydrolase-1 spans 71 to 310 (IVVLLHGFPT…PRSTVSILDD (240 aa)). Residues 98-103 (RVIALD) carry the RVIALD motif. A glycan (N-linked (GlcNAc...) asparagine) is linked at Asn163. Residues 266–286 (VGALASVTIPIHFIYGPLDPV) form a helical membrane-spanning segment.

It belongs to the AB hydrolase superfamily. In terms of tissue distribution, highly expressed in hydatidiform moles, but barely expressed in dermoid cysts. Biallelic expression is detected in blood lymphocytes. Seems to imprinted in an isoform-specific manner rather than in a tissue-specific manner in lymphocytes. Isoform 1 is expressed only from the paternal allele. Isoform 2 is expressed from both the paternal allele and the maternal allele.

It localises to the endoplasmic reticulum membrane. The sequence is that of Mesoderm-specific transcript homolog protein (MEST) from Homo sapiens (Human).